The chain runs to 140 residues: Large ribosomal subunit protein uL15 (140 aa).

The segment at 1–32 is disordered; sequence MDTKKFRGSRTCGGGTHKNRRGAGNRGGRGKA.

It belongs to the universal ribosomal protein uL15 family. As to quaternary structure, part of the 50S ribosomal subunit.

Functionally, binds to the 23S rRNA. This Methanosarcina acetivorans (strain ATCC 35395 / DSM 2834 / JCM 12185 / C2A) protein is Large ribosomal subunit protein uL15.